The sequence spans 948 residues: Phosphoenolpyruvate carboxylase (948 aa).

Catalysis depends on residues histidine 138 and lysine 610.

This sequence belongs to the PEPCase type 1 family. Mg(2+) serves as cofactor.

The enzyme catalyses oxaloacetate + phosphate = phosphoenolpyruvate + hydrogencarbonate. Its function is as follows. Forms oxaloacetate, a four-carbon dicarboxylic acid source for the tricarboxylic acid cycle. This Streptococcus gordonii (strain Challis / ATCC 35105 / BCRC 15272 / CH1 / DL1 / V288) protein is Phosphoenolpyruvate carboxylase.